The sequence spans 325 residues: Tetraacyldisaccharide 4'-kinase (325 aa).

ATP is bound at residue Ser-53–Thr-60.

The protein belongs to the LpxK family.

It catalyses the reaction a lipid A disaccharide + ATP = a lipid IVA + ADP + H(+). It participates in glycolipid biosynthesis; lipid IV(A) biosynthesis; lipid IV(A) from (3R)-3-hydroxytetradecanoyl-[acyl-carrier-protein] and UDP-N-acetyl-alpha-D-glucosamine: step 6/6. Transfers the gamma-phosphate of ATP to the 4'-position of a tetraacyldisaccharide 1-phosphate intermediate (termed DS-1-P) to form tetraacyldisaccharide 1,4'-bis-phosphate (lipid IVA). The protein is Tetraacyldisaccharide 4'-kinase of Pasteurella multocida (strain Pm70).